The sequence spans 156 residues: Small ribosomal subunit protein uS7 (156 aa).

It belongs to the universal ribosomal protein uS7 family. In terms of assembly, part of the 30S ribosomal subunit. Contacts proteins S9 and S11.

One of the primary rRNA binding proteins, it binds directly to 16S rRNA where it nucleates assembly of the head domain of the 30S subunit. Is located at the subunit interface close to the decoding center, probably blocks exit of the E-site tRNA. This is Small ribosomal subunit protein uS7 from Dinoroseobacter shibae (strain DSM 16493 / NCIMB 14021 / DFL 12).